The following is a 712-amino-acid chain: Dynamin-1-like protein drp-1 (712 aa).

In terms of domain architecture, Dynamin-type G spans 24-304 (QIQLPQIVVV…LMHHIRNCLP (281 aa)). Residues 34-41 (GSQSAGKS) are G1 motif. The interval 60-62 (VTR) is G2 motif. A G3 motif region spans residues 148–151 (DLPG). A G4 motif region spans residues 217–220 (TKLD). The segment at 247–250 (VNRS) is G5 motif. The tract at residues 280-502 (SRNGTPYLAK…LAYINTKHPE (223 aa)) is interaction with caspase ced-9. The tract at residues 523–542 (GRSRNRHASTGERAVSAHGE) is disordered. Positions 620 to 711 (VAIIERLIRN…IISEVRETQV (92 aa)) constitute a GED domain.

It belongs to the TRAFAC class dynamin-like GTPase superfamily. Dynamin/Fzo/YdjA family. In terms of assembly, interacts (via residues 280-502) with caspase ced-9; the interaction is enhanced by GTP rather than GDP; the interaction is probably direct and may occur at the mitochondrion. Highly expressed in neurons, in intestinal cells and in the body wall, pharyngeal, and vulval muscles.

It localises to the mitochondrion. Its subcellular location is the mitochondrion outer membrane. The protein localises to the cytoplasm. The protein resides in the cytosol. The enzyme catalyses GTP + H2O = GDP + phosphate + H(+). GTPase activity is increased by binding to phospholipid membranes. Functions in mitochondrial division. Functions in peroxisomal division. Mediates membrane fission, perhaps mainly of the mitochondrial outer membrane. Mitochondrial fission may be promoted by recruitment to mitochondrial membranes via the egl-1/ced-9 complex. Involved in the coordination of mitochondrial division with autophagy in response to acute heat stress during larval development. Plays a role in apoptosis by promoting mitochondrial elimination and cell-death execution, acting downstream of caspase ced-3, and perhaps independently of FIS1-related protein fis-2, caspase ced-9 and apoptosis-inducing factor AIFM/wah-1. Role in promoting apoptosis dependent upon cleavage of drp-1 by ced-3. Involved in negatively modulating longevity in concert with the Insulin/IGF-1-like signaling (IIS) mediated pathway. The chain is Dynamin-1-like protein drp-1 from Caenorhabditis elegans.